The sequence spans 479 residues: Glycogen synthase (479 aa).

Lys15 provides a ligand contact to ADP-alpha-D-glucose.

This sequence belongs to the glycosyltransferase 1 family. Bacterial/plant glycogen synthase subfamily.

The catalysed reaction is [(1-&gt;4)-alpha-D-glucosyl](n) + ADP-alpha-D-glucose = [(1-&gt;4)-alpha-D-glucosyl](n+1) + ADP + H(+). It participates in glycan biosynthesis; glycogen biosynthesis. In terms of biological role, synthesizes alpha-1,4-glucan chains using ADP-glucose. The protein is Glycogen synthase of Roseobacter denitrificans (strain ATCC 33942 / OCh 114) (Erythrobacter sp. (strain OCh 114)).